Consider the following 79-residue polypeptide: Transcriptional regulator SplA (79 aa).

Its function is as follows. Regulator of the spore photoproduct lyase operon (splAB). The polypeptide is Transcriptional regulator SplA (splA) (Bacillus subtilis (strain 168)).